A 311-amino-acid chain; its full sequence is HPr kinase/phosphorylase (311 aa).

Residues H138 and K159 contribute to the active site. 153–160 is a binding site for ATP; the sequence is GSSGIGKS. A Mg(2+)-binding site is contributed by S160. Catalysis depends on D177, which acts as the Proton acceptor; for phosphorylation activity. Proton donor; for dephosphorylation activity. The important for the catalytic mechanism of both phosphorylation and dephosphorylation stretch occupies residues 201–210; the sequence is LEIRGVGIIN. E202 serves as a coordination point for Mg(2+). Residue R243 is part of the active site. Positions 264–269 are important for the catalytic mechanism of dephosphorylation; sequence PVRPGR.

Belongs to the HPrK/P family. In terms of assembly, homohexamer. Mg(2+) is required as a cofactor.

The enzyme catalyses [HPr protein]-L-serine + ATP = [HPr protein]-O-phospho-L-serine + ADP + H(+). It carries out the reaction [HPr protein]-O-phospho-L-serine + phosphate + H(+) = [HPr protein]-L-serine + diphosphate. Functionally, catalyzes the ATP- as well as the pyrophosphate-dependent phosphorylation of a specific serine residue in HPr, a phosphocarrier protein of the phosphoenolpyruvate-dependent sugar phosphotransferase system (PTS). HprK/P also catalyzes the pyrophosphate-producing, inorganic phosphate-dependent dephosphorylation (phosphorolysis) of seryl-phosphorylated HPr (P-Ser-HPr). The two antagonistic activities of HprK/P are regulated by several intracellular metabolites, which change their concentration in response to the absence or presence of rapidly metabolisable carbon sources (glucose, fructose, etc.) in the growth medium. Therefore, by controlling the phosphorylation state of HPr, HPrK/P is a sensor enzyme that plays a major role in the regulation of carbon metabolism and sugar transport: it mediates carbon catabolite repression (CCR), and regulates PTS-catalyzed carbohydrate uptake and inducer exclusion. The polypeptide is HPr kinase/phosphorylase (Brevibacillus brevis (strain 47 / JCM 6285 / NBRC 100599)).